The sequence spans 799 residues: Protein phosphatase 1 regulatory subunit 3F (799 aa).

Residues 1–30 (MARTAPVEPPLRHPAPPSPAAGEPRASAEA) are disordered. Residues 1-772 (MARTAPVEPP…LTQTLGVLAG (772 aa)) are Cytoplasmic-facing. The span at 7–19 (VEPPLRHPAPPSP) shows a compositional bias: pro residues. Serine 18 bears the Phosphoserine mark. Low complexity predominate over residues 20–30 (AAGEPRASAEA). The PP1-binding motif motif lies at 36–39 (RVLF). 4 disordered regions span residues 53–108 (RYRP…PVPA), 201–235 (SPPG…SPDD), 332–353 (RRRP…LAEH), and 417–439 (ATCG…DRAA). The span at 78 to 97 (ADEEDDGEDGDEGEEEEEAF) shows a compositional bias: acidic residues. In terms of domain architecture, CBM21 spans 127-283 (LERLGRVMVE…NNHGRNYTVL (157 aa)). Residues 334–353 (RPFEEEPRMRSADDNTLAEH) show a composition bias toward basic and acidic residues. Residue serine 545 is modified to Phosphoserine. Disordered stretches follow at residues 566 to 600 (KDTE…PPEI), 663 to 688 (SKSP…SWVP), and 722 to 743 (PHVN…KRSP). The segment covering 569-579 (EDPDDEGEGED) has biased composition (acidic residues). Residues 585–594 (PSSPEGGSPK) show a composition bias toward low complexity. Residues serine 587 and serine 592 each carry the phosphoserine modification. Basic and acidic residues predominate over residues 679–688 (PTERESSWVP). The chain crosses the membrane as a helical span at residues 773–793 (LVMVPVALNSGVSLLVLVLCL). The Extracellular portion of the chain corresponds to 794–799 (SLAWFS).

Highly expressed in brain (at protein level).

The protein localises to the membrane. Glycogen-targeting subunit for protein phosphatase 1 (PP1). The sequence is that of Protein phosphatase 1 regulatory subunit 3F (Ppp1r3f) from Mus musculus (Mouse).